A 76-amino-acid chain; its full sequence is MSIEERVKKIIVDQLGVKEEEVKSEASFIEDLGADSLDTVELVMALEEEFDIEIPDEEAEKITTVQSAIDYVQNNQ.

Residues Met1–Gln76 enclose the Carrier domain. Ser36 is subject to O-(pantetheine 4'-phosphoryl)serine.

It belongs to the acyl carrier protein (ACP) family. Post-translationally, 4'-phosphopantetheine is transferred from CoA to a specific serine of apo-ACP by AcpS. This modification is essential for activity because fatty acids are bound in thioester linkage to the sulfhydryl of the prosthetic group.

The protein localises to the cytoplasm. The protein operates within lipid metabolism; fatty acid biosynthesis. Its function is as follows. Carrier of the growing fatty acid chain in fatty acid biosynthesis. The chain is Acyl carrier protein from Mannheimia succiniciproducens (strain KCTC 0769BP / MBEL55E).